Here is a 137-residue protein sequence, read N- to C-terminus: Large ribosomal subunit protein uL16 (137 aa).

The protein belongs to the universal ribosomal protein uL16 family. In terms of assembly, part of the 50S ribosomal subunit.

Binds 23S rRNA and is also seen to make contacts with the A and possibly P site tRNAs. The protein is Large ribosomal subunit protein uL16 of Streptococcus pyogenes serotype M1.